The following is a 125-amino-acid chain: Large ribosomal subunit protein bL12 (125 aa).

The protein belongs to the bacterial ribosomal protein bL12 family. As to quaternary structure, homodimer. Part of the ribosomal stalk of the 50S ribosomal subunit. Forms a multimeric L10(L12)X complex, where L10 forms an elongated spine to which 2 to 4 L12 dimers bind in a sequential fashion. Binds GTP-bound translation factors.

In terms of biological role, forms part of the ribosomal stalk which helps the ribosome interact with GTP-bound translation factors. Is thus essential for accurate translation. This chain is Large ribosomal subunit protein bL12, found in Anaeromyxobacter sp. (strain Fw109-5).